The primary structure comprises 297 residues: Protein COFACTOR ASSEMBLY OF COMPLEX C SUBUNIT B CCB4, chloroplastic (297 aa).

The transit peptide at 1 to 33 (MEARIILLRIQIPWSANRQFSHPPLDFPRFIRA) directs the protein to the chloroplast. Over 34–70 (SSSSTSQKPKTYEGPKPRKNLVADFISKNDDLVRSLP) the chain is Stromal. Residues 71–91 (IYVGGASLLAVLFNRTVSGIA) form a helical membrane-spanning segment. Residues 92–103 (PVADASSSQSRA) lie on the Lumenal side of the membrane. A helical membrane pass occupies residues 104-124 (DLLALGLAVTNLLTGLVWLSI). The Stromal segment spans residues 125 to 297 (RPKSITPVNP…DSDEISRVTV (173 aa)).

It is found in the plastid. Its subcellular location is the chloroplast thylakoid membrane. Required for the biogenesis and accumulation of native cytochrome b6 in the thylakoid membrane. Controls the conversion of apocytochrome b6 to holocytochrome b6. Required for covalent binding of the c-type heme to cytochrome b6. This is Protein COFACTOR ASSEMBLY OF COMPLEX C SUBUNIT B CCB4, chloroplastic from Arabidopsis thaliana (Mouse-ear cress).